The primary structure comprises 207 residues: Strobilurin A biosynthesis cluster protein r1 (207 aa).

Helical transmembrane passes span 108-128 (FIFP…LLYL) and 169-189 (NLTT…PFWI).

The protein resides in the membrane. Its pathway is mycotoxin biosynthesis. Part of the gene cluster that mediates the biosynthesis of strobilurin A, an antifungal polyketide that contains a key beta-methoxyacrylate toxophore that targets the complex III of the mitochondrial electron transport chain. Strobilurin biosynthesis begins with construction of benzoyl CoA by step-wise elimination of ammonia from phenylalanine by the phenylalanine ammonia-lyase str11, oxygenation by str8 and retro-Claisen reaction to form benzoic acid, which is activated to its CoA thiolester benzoyl CoA by the dedicated CoA ligase str10. Benzoyl CoA forms the starter unit for the highly reducing polyketide synthase stpks1 that produces the polyketide prestrobilutin A. The FAD-dependent oxygenase str9 then catalyzes the key oxidative rearrangement responsible for the creation of the beta-methoxyacrylate toxophore. Str9 performs epoxidation of the 2,3 olefin of prestrobilutin A, followed by Meinwald rearrangement to furnish the aldehyde intermediate. Rapid enolization of the aldehyde intermediate would give the beta-methoxyacrylate skeleton and methylations catalyzed by str2 and str3 complete the synthesis and lead to the production of strobilurin A. The short-chain dehydrogenase stl2 and the dehydrogenase str4 play a role in the shunt pathway leading to the production of bolineol. The cluster encodes no obvious halogenase gene that could be involved in production of strobilurin B, nor any obvious dimethylallyl-transferase that could be involved in the production of strobilurin G. It is possible that unknown proteins encoded in, or near, the cluster (such as str1 or stl1) may form new classes of halogenases or dimethylally-transferases, or that the responsible genes are located elsewhere on the genome. Similarly, proteins encoded by str5/str6 hydrolases appear to have no chemical role in the biosynthesis of strobilurin A. Finally, no obvious self-resistance gene is found within the cluster. This Strobilurus tenacellus protein is Strobilurin A biosynthesis cluster protein r1.